The chain runs to 502 residues: Glycerol kinase (502 aa).

ADP is bound at residue Thr14. Thr14, Thr15, and Ser16 together coordinate ATP. Thr14 is a binding site for sn-glycerol 3-phosphate. Arg18 lines the ADP pocket. Sn-glycerol 3-phosphate-binding residues include Arg84, Glu85, Tyr136, and Asp246. Glycerol is bound by residues Arg84, Glu85, Tyr136, Asp246, and Gln247. The ADP site is built by Thr268 and Gly311. Thr268, Gly311, Gln315, and Gly412 together coordinate ATP. The ADP site is built by Gly412 and Asn416.

The protein belongs to the FGGY kinase family. Homotetramer and homodimer (in equilibrium). Heterodimer with EIIA-Glc. Binds 1 zinc ion per glycerol kinase EIIA-Glc dimer. The zinc ion is important for dimerization.

It carries out the reaction glycerol + ATP = sn-glycerol 3-phosphate + ADP + H(+). It participates in polyol metabolism; glycerol degradation via glycerol kinase pathway; sn-glycerol 3-phosphate from glycerol: step 1/1. Activity of this regulatory enzyme is affected by several metabolites. Allosterically and non-competitively inhibited by fructose 1,6-bisphosphate (FBP) and unphosphorylated phosphocarrier protein EIIA-Glc (III-Glc), an integral component of the bacterial phosphotransferase (PTS) system. Its function is as follows. Key enzyme in the regulation of glycerol uptake and metabolism. Catalyzes the phosphorylation of glycerol to yield sn-glycerol 3-phosphate. The chain is Glycerol kinase from Salmonella agona (strain SL483).